Reading from the N-terminus, the 514-residue chain is Protein nucleotidyltransferase YdiU (514 aa).

Residues Gly90, Gly92, Arg93, Lys113, Asp125, Gly126, Arg176, and Arg183 each coordinate ATP. Asp267 (proton acceptor) is an active-site residue. Positions 268 and 277 each coordinate Mg(2+). Asp277 contacts ATP.

It belongs to the SELO family. Mg(2+) is required as a cofactor. It depends on Mn(2+) as a cofactor.

It carries out the reaction L-seryl-[protein] + ATP = 3-O-(5'-adenylyl)-L-seryl-[protein] + diphosphate. The catalysed reaction is L-threonyl-[protein] + ATP = 3-O-(5'-adenylyl)-L-threonyl-[protein] + diphosphate. The enzyme catalyses L-tyrosyl-[protein] + ATP = O-(5'-adenylyl)-L-tyrosyl-[protein] + diphosphate. It catalyses the reaction L-histidyl-[protein] + UTP = N(tele)-(5'-uridylyl)-L-histidyl-[protein] + diphosphate. It carries out the reaction L-seryl-[protein] + UTP = O-(5'-uridylyl)-L-seryl-[protein] + diphosphate. The catalysed reaction is L-tyrosyl-[protein] + UTP = O-(5'-uridylyl)-L-tyrosyl-[protein] + diphosphate. Its function is as follows. Nucleotidyltransferase involved in the post-translational modification of proteins. It can catalyze the addition of adenosine monophosphate (AMP) or uridine monophosphate (UMP) to a protein, resulting in modifications known as AMPylation and UMPylation. The sequence is that of Protein nucleotidyltransferase YdiU from Photobacterium profundum (strain SS9).